Reading from the N-terminus, the 159-residue chain is Phosphopantetheine adenylyltransferase (159 aa).

Ser8 provides a ligand contact to substrate. ATP contacts are provided by residues 8 to 9 (SF) and His16. Substrate contacts are provided by Lys40, Leu72, and Arg86. ATP-binding positions include 87–89 (GLR), Glu97, and 122–128 (YSFISSS).

This sequence belongs to the bacterial CoaD family. As to quaternary structure, homohexamer. Mg(2+) is required as a cofactor.

Its subcellular location is the cytoplasm. The catalysed reaction is (R)-4'-phosphopantetheine + ATP + H(+) = 3'-dephospho-CoA + diphosphate. The protein operates within cofactor biosynthesis; coenzyme A biosynthesis; CoA from (R)-pantothenate: step 4/5. Its function is as follows. Reversibly transfers an adenylyl group from ATP to 4'-phosphopantetheine, yielding dephospho-CoA (dPCoA) and pyrophosphate. This Thermosipho melanesiensis (strain DSM 12029 / CIP 104789 / BI429) protein is Phosphopantetheine adenylyltransferase.